The chain runs to 1423 residues: DNA-directed RNA polymerase subunit beta' (1423 aa).

Zn(2+) contacts are provided by Cys71, Cys73, Cys86, and Cys89. Positions 461, 463, and 465 each coordinate Mg(2+). Residues Cys815, Cys889, Cys896, and Cys899 each coordinate Zn(2+).

It belongs to the RNA polymerase beta' chain family. The RNAP catalytic core consists of 2 alpha, 1 beta, 1 beta' and 1 omega subunit. When a sigma factor is associated with the core the holoenzyme is formed, which can initiate transcription. The cofactor is Mg(2+). Requires Zn(2+) as cofactor.

The catalysed reaction is RNA(n) + a ribonucleoside 5'-triphosphate = RNA(n+1) + diphosphate. Its function is as follows. DNA-dependent RNA polymerase catalyzes the transcription of DNA into RNA using the four ribonucleoside triphosphates as substrates. This Actinobacillus pleuropneumoniae serotype 7 (strain AP76) protein is DNA-directed RNA polymerase subunit beta'.